A 392-amino-acid polypeptide reads, in one-letter code: Cyclic AMP receptor 1 (392 aa).

The Extracellular segment spans residues 1-13 (MGLLDGNPANETS). An N-linked (GlcNAc...) asparagine glycan is attached at Asn10. The chain crosses the membrane as a helical span at residues 14–33 (LVLLLFADFSSMLGCMAVLI). The Cytoplasmic segment spans residues 34–47 (GFWRLKLLRNHVTK). The chain crosses the membrane as a helical span at residues 48 to 68 (VIACFCATSFCKDFPSTILTL). Topologically, residues 69 to 83 (TNTAVNGGFPCYLYA) are extracellular. Residues 84–109 (IVITYGSFACWLWTLCLAISIYMLIV) form a helical membrane-spanning segment. The Cytoplasmic segment spans residues 110–120 (KREPEPERFEK). Residues 121–139 (YYYLLCWGLPLISTIVMLA) traverse the membrane as a helical segment. Residues 140 to 162 (KNTVQFVGNWCWIGVSFTGYRFG) are Extracellular-facing. Residues 163–181 (LFYGPFLFIWAISAVLVGL) traverse the membrane as a helical segment. The Cytoplasmic segment spans residues 182–205 (TSRYTYVVIHNGVSDNKEKHLTYQ). Residues 206–224 (FKLINYIIVFLVCWVFAVV) form a helical membrane-spanning segment. Over 225–235 (NRIVNGLNMFP) the chain is Extracellular. Residues 236 to 260 (PALNILHTYLSVSHGFWASVTFIYN) form a helical membrane-spanning segment. Residues 261 to 392 (NPLMWRYFGA…STSTNGQGNN (132 aa)) lie on the Cytoplasmic side of the membrane. Disordered regions lie at residues 292 to 324 (NKNNNNPSPYSSSRGTSGKTMGGHPTGDDVQCS) and 339 to 392 (VNNQ…QGNN). Over residues 298–310 (PSPYSSSRGTSGK) the composition is skewed to polar residues. Residues Ser299, Ser302, Ser303, Ser304, Ser308, Ser360, Ser361, Ser362, Ser363, Ser364, Ser366, Ser367, and Ser368 each carry the phosphoserine modification. Residues 340-367 (NNQQNLNNNYGLQQNYNDEGSSSSSLSS) are compositionally biased toward low complexity. A compositionally biased stretch (polar residues) spans 375–392 (VEMQNIQISTSTNGQGNN).

Belongs to the G-protein coupled receptor 5 family. C-terminal Ser or Thr residues may be phosphorylated.

Its subcellular location is the membrane. Receptor for cAMP. Coordinates the aggregation of individual cells into a multicellular organism and regulates the expression of a large number of developmentally regulated genes. The activity of this receptor is mediated by G proteins. This is Cyclic AMP receptor 1 (carA-1) from Dictyostelium discoideum (Social amoeba).